Consider the following 425-residue polypeptide: MTKKHLTETRFADLALHPKIQQAISSAGFEYCTPIQALSLPVALSNRDVAGQAQTGTGKTLAFLLATFNRLMQNESSEKTESGPRALIMAPTRELAIQIAHDADALIEHCGLKMGVIYGGEGYEGQKEQLAAQPDILVGTTGRLIDFYKQDLFSLKDIEVVVLDEADRMFDLGFIDDIRYLLQKMPDPSKRLNLLFSATLSYRVQELAYEHMNAPTKLEVEPLQKTATRVTEELFYPSKPEKFPLLLTLIEEDWPDKAIVFANTKHGCEKVHGWLVANEHRAGLLTGDVPQKKRLRILEDFAEGKLDFLVATDVAARGLHIPEVTHVYNFDLPDDCEDYVHRIGRTGRAGASGAAISLACEEYVYNLPAIEDYIGHTIPVTKYDGDALLSDLRRPRPIQRRRRHNSGGGKGKPRGRRSGPPRNAS.

Residues 9–37 carry the Q motif motif; the sequence is TRFADLALHPKIQQAISSAGFEYCTPIQA. A Helicase ATP-binding domain is found at 40-218; the sequence is LPVALSNRDV…YEHMNAPTKL (179 aa). 53 to 60 contacts ATP; that stretch reads AQTGTGKT. The short motif at 164–167 is the DEAD box element; it reads DEAD. The 148-residue stretch at 242–389 folds into the Helicase C-terminal domain; sequence KFPLLLTLIE…VTKYDGDALL (148 aa). The segment at 391 to 425 is disordered; that stretch reads DLRRPRPIQRRRRHNSGGGKGKPRGRRSGPPRNAS. Residues 395-419 are compositionally biased toward basic residues; the sequence is PRPIQRRRRHNSGGGKGKPRGRRSG.

Belongs to the DEAD box helicase family. RhlB subfamily. As to quaternary structure, component of the RNA degradosome, which is a multiprotein complex involved in RNA processing and mRNA degradation.

The protein localises to the cytoplasm. It catalyses the reaction ATP + H2O = ADP + phosphate + H(+). Functionally, DEAD-box RNA helicase involved in RNA degradation. Has RNA-dependent ATPase activity and unwinds double-stranded RNA. The polypeptide is ATP-dependent RNA helicase RhlB (Idiomarina loihiensis (strain ATCC BAA-735 / DSM 15497 / L2-TR)).